Reading from the N-terminus, the 472-residue chain is Protein c-ets-2-A (472 aa).

A PNT domain is found at 85–170; it reads NTFNGFAKKR…EHLEEMMKEH (86 aa). The segment at residues 366–446 is a DNA-binding region (ETS); that stretch reads IQLWQFLLEL…SGKRYVYRFV (81 aa).

It belongs to the ETS family.

It is found in the nucleus. Its function is as follows. Probable transcription factor. The protein is Protein c-ets-2-A (ets2-a) of Xenopus laevis (African clawed frog).